The primary structure comprises 405 residues: Argininosuccinate synthase (405 aa).

ATP contacts are provided by residues 11 to 19 (AYSGGLDTS) and Ala-38. L-citrulline-binding residues include Tyr-91 and Ser-96. Gly-121 is an ATP binding site. L-aspartate contacts are provided by Thr-123, Asn-127, and Asp-128. An L-citrulline-binding site is contributed by Asn-127. L-citrulline is bound by residues Arg-131, Ser-181, Ser-190, Glu-266, and Tyr-278.

This sequence belongs to the argininosuccinate synthase family. Type 1 subfamily. Homotetramer.

The protein resides in the cytoplasm. It catalyses the reaction L-citrulline + L-aspartate + ATP = 2-(N(omega)-L-arginino)succinate + AMP + diphosphate + H(+). Its pathway is amino-acid biosynthesis; L-arginine biosynthesis; L-arginine from L-ornithine and carbamoyl phosphate: step 2/3. This is Argininosuccinate synthase from Nitratiruptor sp. (strain SB155-2).